The sequence spans 501 residues: Glucans biosynthesis protein G (501 aa).

The signal sequence occupies residues 1–24; sequence MNRRQVLAALAAIPLLPEAFPANA.

Belongs to the OpgD/OpgG family.

It is found in the periplasm. The protein operates within glycan metabolism; osmoregulated periplasmic glucan (OPG) biosynthesis. Its function is as follows. Involved in the biosynthesis of osmoregulated periplasmic glucans (OPGs). In Rhodopseudomonas palustris (strain BisA53), this protein is Glucans biosynthesis protein G.